The primary structure comprises 87 residues: Antitoxin RelB1 (87 aa).

Functionally, antitoxin component of a type II toxin-antitoxin (TA) system. Neutralizes the effect of cognate toxin RelE1, but no other RelE or ParE toxin. The protein is Antitoxin RelB1 (relB1) of Caulobacter vibrioides (strain ATCC 19089 / CIP 103742 / CB 15) (Caulobacter crescentus).